Reading from the N-terminus, the 66-residue chain is Metallothionein-like protein type 3 (66 aa).

Belongs to the metallothionein superfamily. Type 15 family.

Functionally, metallothioneins have a high content of cysteine residues that bind various heavy metals. The sequence is that of Metallothionein-like protein type 3 (MT2) from Malus domestica (Apple).